The following is a 78-amino-acid chain: Acyl carrier protein (78 aa).

The Carrier domain maps to 2–77; it reads QNIEKKIKKI…SIFDIIKKYV (76 aa). The residue at position 37 (serine 37) is an O-(pantetheine 4'-phosphoryl)serine.

This sequence belongs to the acyl carrier protein (ACP) family. 4'-phosphopantetheine is transferred from CoA to a specific serine of apo-ACP by AcpS. This modification is essential for activity because fatty acids are bound in thioester linkage to the sulfhydryl of the prosthetic group.

It is found in the cytoplasm. It participates in lipid metabolism; fatty acid biosynthesis. Functionally, carrier of the growing fatty acid chain in fatty acid biosynthesis. The polypeptide is Acyl carrier protein (Buchnera aphidicola subsp. Baizongia pistaciae (strain Bp)).